The primary structure comprises 278 residues: 4-deoxy-L-threo-5-hexosulose-uronate ketol-isomerase (278 aa).

Residues H196, H198, E203, and H245 each contribute to the Zn(2+) site.

The protein belongs to the KduI family. It depends on Zn(2+) as a cofactor.

It carries out the reaction 5-dehydro-4-deoxy-D-glucuronate = 3-deoxy-D-glycero-2,5-hexodiulosonate. It participates in glycan metabolism; pectin degradation; 2-dehydro-3-deoxy-D-gluconate from pectin: step 4/5. Its function is as follows. Catalyzes the isomerization of 5-dehydro-4-deoxy-D-glucuronate to 3-deoxy-D-glycero-2,5-hexodiulosonate. The chain is 4-deoxy-L-threo-5-hexosulose-uronate ketol-isomerase from Salmonella choleraesuis (strain SC-B67).